The chain runs to 350 residues: sn-1 oleoyl-lipid 12-desaturase (350 aa).

The next 2 helical transmembrane spans lie at 41 to 61 (AWTQ…SLAI) and 64 to 84 (WFLL…FFVI). Positions 86-90 (HDCGH) match the Histidine box-1 motif. Residues 98 to 118 (WVNDLVGHIFMMPLIYPFHSW) form a helical membrane-spanning segment. The Histidine box-2 motif lies at 122–126 (HNHHH). A run of 2 helical transmembrane segments spans residues 196–216 (VAVV…TTGI) and 219–239 (FVKF…TFTI). The Histidine box-3 motif lies at 287-291 (HHLST).

This sequence belongs to the fatty acid desaturase type 2 family. Requires Fe(2+) as cofactor.

Its subcellular location is the membrane. It catalyses the reaction a 1-[(9Z)-octadecenoyl]-2-acyl-glycerolipid + 2 reduced [2Fe-2S]-[ferredoxin] + O2 + 2 H(+) = a 1-[(9Z,12Z)-octadecdienoyl]-2-acyl-glycerolipid + 2 oxidized [2Fe-2S]-[ferredoxin] + 2 H2O. The protein operates within lipid metabolism; polyunsaturated fatty acid biosynthesis. Its function is as follows. Desaturase involved in fatty acid biosynthesis. Introduces a double bond at carbon 12 of oleoyl groups (18:1) attached to the sn-1 position of the glycerol moiety of membrane glycerolipids. The chain is sn-1 oleoyl-lipid 12-desaturase from Anabaena variabilis.